Reading from the N-terminus, the 191-residue chain is UPF0312 protein Sden_2128 (191 aa).

Positions 1-22 (MKKHLLASLLGASLLLPTAVNA) are cleaved as a signal peptide.

Belongs to the UPF0312 family. Type 1 subfamily.

It localises to the periplasm. In Shewanella denitrificans (strain OS217 / ATCC BAA-1090 / DSM 15013), this protein is UPF0312 protein Sden_2128.